A 200-amino-acid chain; its full sequence is Large ribosomal subunit protein uL4 (200 aa).

Positions 43–71 (RAQKTRAEVSGSGKKPWRQKGTGRARSGD) are disordered.

This sequence belongs to the universal ribosomal protein uL4 family. In terms of assembly, part of the 50S ribosomal subunit.

Functionally, one of the primary rRNA binding proteins, this protein initially binds near the 5'-end of the 23S rRNA. It is important during the early stages of 50S assembly. It makes multiple contacts with different domains of the 23S rRNA in the assembled 50S subunit and ribosome. Its function is as follows. Forms part of the polypeptide exit tunnel. This is Large ribosomal subunit protein uL4 from Mannheimia succiniciproducens (strain KCTC 0769BP / MBEL55E).